A 291-amino-acid chain; its full sequence is Oxidative stress-responsive serine-rich protein 1 (291 aa).

The segment at 29–139 (ISLSVGEGPS…NAGENSTSLD (111 aa)) is disordered. Residues 65–83 (STRKSSRGAVRTQRRRRSK) are compositionally biased toward basic residues. A compositionally biased stretch (polar residues) spans 95–105 (CSTTAPPSSSQ). Phosphothreonine is present on Thr-143.

This Mus musculus (Mouse) protein is Oxidative stress-responsive serine-rich protein 1 (Oser1).